The chain runs to 229 residues: MTAAAVFGCTGAVGSQILATLLASDAFSSVATVSRKLPTAESPKLQAIEEGDTSKWGTTIASLSPKPSVVFNAVGTTRAAAGGIQNQWKIDHDLCIEIAKAAKEAGVKTYVFISSGGTRGFLSRHVPYSKMKIGVEDAIKELGFEHAIILRPGMIIGREKSKAPLFEAIVGHLNKLGQGVQDRIGQDQLIIGRAAVAAARLAEDGKAPSKFWAVEMSDIVRLGRDEWKE.

The transit peptide at 1-44 directs the protein to the mitochondrion; the sequence is MTAAAVFGCTGAVGSQILATLLASDAFSSVATVSRKLPTAESPK.

Belongs to the FMP52 family.

The protein localises to the mitochondrion outer membrane. The sequence is that of Protein fmp52-2, mitochondrial (fmp522) from Aspergillus terreus (strain NIH 2624 / FGSC A1156).